The following is a 473-amino-acid chain: tRNA modification GTPase MnmE (473 aa).

Residues Arg-28, Glu-93, and Arg-132 each coordinate (6S)-5-formyl-5,6,7,8-tetrahydrofolate. Residues 228–394 (GVATVLVGSP…LKQQMSNMVA (167 aa)) form the TrmE-type G domain. GTP contacts are provided by residues 238-243 (NAGKST), 257-263 (SHQPGTT), and 282-285 (DTAG). Ser-242 and Thr-263 together coordinate Mg(2+). Lys-473 is a binding site for (6S)-5-formyl-5,6,7,8-tetrahydrofolate.

The protein belongs to the TRAFAC class TrmE-Era-EngA-EngB-Septin-like GTPase superfamily. TrmE GTPase family. In terms of assembly, homodimer. Heterotetramer of two MnmE and two MnmG subunits. Requires K(+) as cofactor.

It localises to the cytoplasm. Functionally, exhibits a very high intrinsic GTPase hydrolysis rate. Involved in the addition of a carboxymethylaminomethyl (cmnm) group at the wobble position (U34) of certain tRNAs, forming tRNA-cmnm(5)s(2)U34. The sequence is that of tRNA modification GTPase MnmE from Chlorobium chlorochromatii (strain CaD3).